A 261-amino-acid chain; its full sequence is 4-hydroxy-tetrahydrodipicolinate reductase (261 aa).

NAD(+) is bound by residues 11–16 (GFTGAM), 96–98 (GTT), and 122–125 (APNF). Catalysis depends on histidine 152, which acts as the Proton donor/acceptor. Residue histidine 153 coordinates (S)-2,3,4,5-tetrahydrodipicolinate. The active-site Proton donor is the lysine 156. 162–163 (GT) is a (S)-2,3,4,5-tetrahydrodipicolinate binding site.

The protein belongs to the DapB family.

The protein resides in the cytoplasm. It catalyses the reaction (S)-2,3,4,5-tetrahydrodipicolinate + NAD(+) + H2O = (2S,4S)-4-hydroxy-2,3,4,5-tetrahydrodipicolinate + NADH + H(+). It carries out the reaction (S)-2,3,4,5-tetrahydrodipicolinate + NADP(+) + H2O = (2S,4S)-4-hydroxy-2,3,4,5-tetrahydrodipicolinate + NADPH + H(+). It functions in the pathway amino-acid biosynthesis; L-lysine biosynthesis via DAP pathway; (S)-tetrahydrodipicolinate from L-aspartate: step 4/4. Its function is as follows. Catalyzes the conversion of 4-hydroxy-tetrahydrodipicolinate (HTPA) to tetrahydrodipicolinate. The protein is 4-hydroxy-tetrahydrodipicolinate reductase of Lactobacillus acidophilus (strain ATCC 700396 / NCK56 / N2 / NCFM).